A 510-amino-acid polypeptide reads, in one-letter code: Ribonuclease Y (510 aa).

A helical transmembrane segment spans residues 1 to 21 (MLIYILSGLGVLVGALLGYVV). One can recognise a KH domain in the interval 200-260 (TVSTIMLPND…LRREIAKRTI (61 aa)). The region spanning 326–419 (VLNHSIEVAL…VAAADALSAA (94 aa)) is the HD domain.

The protein belongs to the RNase Y family.

The protein localises to the cell membrane. In terms of biological role, endoribonuclease that initiates mRNA decay. In Thermosipho melanesiensis (strain DSM 12029 / CIP 104789 / BI429), this protein is Ribonuclease Y.